Consider the following 622-residue polypeptide: DNA mismatch repair protein MutL (622 aa).

A disordered region spans residues 376–401 (REVREGSSTGRAGNYQPPEPPSREAM).

It belongs to the DNA mismatch repair MutL/HexB family.

In terms of biological role, this protein is involved in the repair of mismatches in DNA. It is required for dam-dependent methyl-directed DNA mismatch repair. May act as a 'molecular matchmaker', a protein that promotes the formation of a stable complex between two or more DNA-binding proteins in an ATP-dependent manner without itself being part of a final effector complex. The sequence is that of DNA mismatch repair protein MutL from Aeromonas hydrophila subsp. hydrophila (strain ATCC 7966 / DSM 30187 / BCRC 13018 / CCUG 14551 / JCM 1027 / KCTC 2358 / NCIMB 9240 / NCTC 8049).